Here is a 254-residue protein sequence, read N- to C-terminus: Serotonin N-acetyltransferase 1, chloroplastic (254 aa).

The N-terminal 83 residues, 1-83, are a transit peptide targeting the chloroplast; that stretch reads MASAASASAS…NSTETVEPPS (83 aa). Positions 119–254 constitute an N-acetyltransferase domain; that stretch reads VNVYDLQALC…IKGMFWYPRF (136 aa).

The protein localises to the plastid. It is found in the chloroplast. It localises to the nucleus. The catalysed reaction is a 2-arylethylamine + acetyl-CoA = an N-acetyl-2-arylethylamine + CoA + H(+). Its pathway is aromatic compound metabolism; melatonin biosynthesis; melatonin from serotonin: step 1/2. In terms of biological role, catalyzes the N-acetylation of serotonin into N-acetylserotonin, the penultimate step in the synthesis of melatonin. Catalyzes in vitro the N-acetylation of tryptamine to produce N-acetyltryptamine, 5-methoxytryptamine to produce melatonin and tyramine to produce N-acetyltyramine. Acetyltransferase required for geminivirus infection and systemic spread. In Oryza sativa subsp. indica (Rice), this protein is Serotonin N-acetyltransferase 1, chloroplastic.